Reading from the N-terminus, the 281-residue chain is MSYPSQGHYLPPEHQYLTAATLASHGHEHLYAHSQLSDSPPRQDLAQRKRPKYTRSKTGCLTCRMKKIKCDETKPTCARCTHGQRECTWPDASSPRRRAPLRRGSIDDRPSTAGSSVSDDSSPSIRNSTPPRRFQMDSPESGLLPPPSARRNMDPFLQLPPVVAPESRHQHIRPRPPPFTPPQSEQHNLTLSPDPSEYCRYDRYDATYAQTHHLHSSHSSPSSRAPHMVTGIRGMGYSPESVHQWNSPPLLSPIESSSYQHYPLQERGMVGPSDNHHFRYQ.

The segment at residues 60–87 is a DNA-binding region (zn(2)-C6 fungal-type); the sequence is CLTCRMKKIKCDETKPTCARCTHGQREC.

It localises to the nucleus. In terms of biological role, transcription factor that acts as a negative regulator of basidioma development via repressing the expression of genes involved in basidioma development, including hydrophobins such as Hyd-1 and Hyd-8, lectins such as JRL1, as well as the fruiting body differentiation gene FVFD16. In Flammulina velutipes (Agaricus velutipes), this protein is Transcription factor lfc1.